The sequence spans 199 residues: UPF0056 membrane protein bbp_399 (199 aa).

6 helical membrane passes run 7–29 (VTILLILIMDPLGNLPIFMSILK), 39–58 (ILIREMMIALLIMLLFLFAG), 71–93 (TVSVSGGIILFLIAIKMIFPTYE), 108–130 (FLVPLAIPLVAGPSLLATLMLLS), 137–156 (ILYLIGSLLIAWMITVVILL), and 176–198 (LMGLILIMLSTQMFLDGIKSWFY).

It belongs to the UPF0056 (MarC) family.

It is found in the cell membrane. This is UPF0056 membrane protein bbp_399 from Buchnera aphidicola subsp. Baizongia pistaciae (strain Bp).